We begin with the raw amino-acid sequence, 321 residues long: Eukaryotic translation initiation factor 3 subunit I (321 aa).

WD repeat units lie at residues 8-47 (GHER…RLGT), 50-89 (GHGG…TLSK), 140-179 (VDNS…KLIS), 182-221 (EHSK…HLKT), and 279-318 (GHFG…DDIE).

Belongs to the eIF-3 subunit I family. In terms of assembly, component of the eukaryotic translation initiation factor 3 (eIF-3) complex.

It is found in the cytoplasm. In terms of biological role, component of the eukaryotic translation initiation factor 3 (eIF-3) complex, which is involved in protein synthesis of a specialized repertoire of mRNAs and, together with other initiation factors, stimulates binding of mRNA and methionyl-tRNAi to the 40S ribosome. The eIF-3 complex specifically targets and initiates translation of a subset of mRNAs involved in cell proliferation. The sequence is that of Eukaryotic translation initiation factor 3 subunit I from Nematostella vectensis (Starlet sea anemone).